The chain runs to 401 residues: Tryptophan synthase beta chain (401 aa).

At K91 the chain carries N6-(pyridoxal phosphate)lysine.

This sequence belongs to the TrpB family. Tetramer of two alpha and two beta chains. It depends on pyridoxal 5'-phosphate as a cofactor.

The enzyme catalyses (1S,2R)-1-C-(indol-3-yl)glycerol 3-phosphate + L-serine = D-glyceraldehyde 3-phosphate + L-tryptophan + H2O. It participates in amino-acid biosynthesis; L-tryptophan biosynthesis; L-tryptophan from chorismate: step 5/5. Functionally, the beta subunit is responsible for the synthesis of L-tryptophan from indole and L-serine. This chain is Tryptophan synthase beta chain, found in Lactococcus lactis subsp. cremoris (strain MG1363).